The following is a 101-amino-acid chain: MKLAIVLLLLGLAVLCLGGKDSQHSASAGDSRSSEAFISRQDSANFARRHKRSYRYNVARGAAVTSPLESQREVCELNPDCDELADHIGFQEAYRRFYGPV.

The signal sequence occupies residues 1 to 18 (MKLAIVLLLLGLAVLCLG). The propeptide occupies 19–52 (GKDSQHSASAGDSRSSEAFISRQDSANFARRHKR). The Gla domain maps to 53–99 (SYRYNVARGAAVTSPLESQREVCELNPDCDELADHIGFQEAYRRFYG). Glu69, Glu73, Glu76, and Asp82 together coordinate Ca(2+). 4-carboxyglutamate occurs at positions 69, 73, and 76. Cysteines 75 and 81 form a disulfide.

It belongs to the osteocalcin/matrix Gla protein family. In terms of processing, gamma-carboxyglutamate residues are formed by vitamin K dependent carboxylation by GGCX. These residues are essential for the binding of calcium.

The protein localises to the secreted. Functionally, the carboxylated form is one of the main organic components of the bone matrix, which constitutes 1-2% of the total bone protein. The carboxylated form binds strongly to apatite and calcium. The polypeptide is Osteocalcin (bglap) (Xenopus tropicalis (Western clawed frog)).